The chain runs to 183 residues: Archaemetzincin (183 aa).

Zn(2+) is bound at residue H132. The Proton acceptor role is filled by E133. Zn(2+) contacts are provided by H136, H142, C143, C148, C167, and C170.

It belongs to the peptidase M54 family. In terms of assembly, monomer. Requires Zn(2+) as cofactor.

In terms of biological role, probable zinc metalloprotease whose natural substrate is unknown. The protein is Archaemetzincin of Aeropyrum pernix (strain ATCC 700893 / DSM 11879 / JCM 9820 / NBRC 100138 / K1).